The primary structure comprises 254 residues: Hydroxyacylglutathione hydrolase (254 aa).

7 residues coordinate Zn(2+): His54, His56, Asp58, His59, His111, Asp130, and His168.

The protein belongs to the metallo-beta-lactamase superfamily. Glyoxalase II family. Monomer. Zn(2+) is required as a cofactor.

The enzyme catalyses an S-(2-hydroxyacyl)glutathione + H2O = a 2-hydroxy carboxylate + glutathione + H(+). The protein operates within secondary metabolite metabolism; methylglyoxal degradation; (R)-lactate from methylglyoxal: step 2/2. Functionally, thiolesterase that catalyzes the hydrolysis of S-D-lactoyl-glutathione to form glutathione and D-lactic acid. This is Hydroxyacylglutathione hydrolase from Legionella pneumophila (strain Corby).